The sequence spans 312 residues: DNA primase small subunit PriS (312 aa).

Catalysis depends on residues D88, D90, and D215.

It belongs to the eukaryotic-type primase small subunit family. As to quaternary structure, heterodimer of a small subunit (PriS) and a large subunit (PriL). The cofactor is Mg(2+). Mn(2+) is required as a cofactor.

Its function is as follows. Catalytic subunit of DNA primase, an RNA polymerase that catalyzes the synthesis of short RNA molecules used as primers for DNA polymerase during DNA replication. The small subunit contains the primase catalytic core and has DNA synthesis activity on its own. Binding to the large subunit stabilizes and modulates the activity, increasing the rate of DNA synthesis while decreasing the length of the DNA fragments, and conferring RNA synthesis capability. The DNA polymerase activity may enable DNA primase to also catalyze primer extension after primer synthesis. May also play a role in DNA repair. The protein is DNA primase small subunit PriS of Pyrobaculum arsenaticum (strain DSM 13514 / JCM 11321 / PZ6).